A 261-amino-acid chain; its full sequence is TM2 domain-containing protein 3 (261 aa).

Positions 1–44 (MEAAAEPLRSVRHLSRVLLFLSQCYILSGDGSLNLEHSQPLAQA) are cleaved as a signal peptide. Residues 45-193 (IKDPGPTRTF…RTFPKLLYCN (149 aa)) lie on the Extracellular side of the membrane. Residues asparagine 101, asparagine 136, asparagine 154, asparagine 171, asparagine 183, and asparagine 193 are each glycosylated (N-linked (GlcNAc...) asparagine). The chain crosses the membrane as a helical span at residues 194–214 (WTGGYKWSTALALSITLGGFG). In terms of domain architecture, TM2 spans 197–244 (GYKWSTALALSITLGGFGADRFYLGQWREGLGKLFSFGGLGIWTLIDV). The Cytoplasmic segment spans residues 215 to 229 (ADRFYLGQWREGLGK). A helical transmembrane segment spans residues 230–250 (LFSFGGLGIWTLIDVLLIGVG). The Extracellular portion of the chain corresponds to 251 to 261 (YVGPADGSLYI).

Belongs to the TM2 family.

Its subcellular location is the membrane. This is TM2 domain-containing protein 3 (Tm2d3) from Mus musculus (Mouse).